Consider the following 256-residue polypeptide: MKIILSPAKTMADPEKTMLRPEIESEIIMTRPVFEQRAQALIRLLKGFSEIELKALFKVSDAIARKTLDQINGFGETRPVPAIFAFQGAVYKALAPEAFTGESLVFCRQNLVILSALYGVLNPFDAVFAHRLDFTCKLECGANMTLRKFWTSPIHEWFDENLAADEFIVNLASDEYASLVTKGGLKARVITLAFMEKKGGVLKTVAAHSKQARGLFLRQIVQQRVTEPGMIKSFKVAGYTYDGKISQKNRWVFVLK.

This sequence belongs to the UPF0246 family.

This Desulforapulum autotrophicum (strain ATCC 43914 / DSM 3382 / VKM B-1955 / HRM2) (Desulfobacterium autotrophicum) protein is UPF0246 protein HRM2_41860.